A 78-amino-acid chain; its full sequence is Protein SlyX homolog (78 aa).

Belongs to the SlyX family.

In Xylella fastidiosa (strain M23), this protein is Protein SlyX homolog.